Reading from the N-terminus, the 166-residue chain is MPKEEVEVLIEGGKADPGPPLGPALGPLGVNIQEVVEEINRKTKDFKGMEVPVKIIVDTETREFEVKVGSPPTSAIIKSELGIDKGAHEPRHETVGDLSMEQVIKIAKMKFDDLLSYDLKTAAKEILGTCGSMGVTVEGKDPKEVQKEIDEGKWDDLFEKYEEEEE.

It belongs to the universal ribosomal protein uL11 family. As to quaternary structure, part of the ribosomal stalk of the 50S ribosomal subunit. Interacts with L10 and the large rRNA to form the base of the stalk. L10 forms an elongated spine to which L12 dimers bind in a sequential fashion forming a multimeric L10(L12)X complex.

Its function is as follows. Forms part of the ribosomal stalk which helps the ribosome interact with GTP-bound translation factors. The sequence is that of Large ribosomal subunit protein uL11 from Methanopyrus kandleri (strain AV19 / DSM 6324 / JCM 9639 / NBRC 100938).